The primary structure comprises 404 residues: Phosphopentomutase (404 aa).

The Mn(2+) site is built by aspartate 10, aspartate 303, histidine 308, aspartate 344, histidine 345, and histidine 356.

It belongs to the phosphopentomutase family. The cofactor is Mn(2+).

The protein localises to the cytoplasm. It carries out the reaction 2-deoxy-alpha-D-ribose 1-phosphate = 2-deoxy-D-ribose 5-phosphate. The catalysed reaction is alpha-D-ribose 1-phosphate = D-ribose 5-phosphate. The protein operates within carbohydrate degradation; 2-deoxy-D-ribose 1-phosphate degradation; D-glyceraldehyde 3-phosphate and acetaldehyde from 2-deoxy-alpha-D-ribose 1-phosphate: step 1/2. Its function is as follows. Isomerase that catalyzes the conversion of deoxy-ribose 1-phosphate (dRib-1-P) and ribose 1-phosphate (Rib-1-P) to deoxy-ribose 5-phosphate (dRib-5-P) and ribose 5-phosphate (Rib-5-P), respectively. The sequence is that of Phosphopentomutase from Shewanella baltica (strain OS223).